The chain runs to 343 residues: MKVSIIGATGYSGLELIRLIQQHSSVDIATLHSFSNQTNLLSNLYPHLKNLEASPLEKINPKDIIEKSETVFLATPSGISKDIALPYIDAGLNVIDLSGDFRLKNSQLYEKWYEKSAPLENYLMRAEYGLAEFRENKESTFIANPGCYATATLLGLAPLVKKQLIEPTSIIVDAKSGISGAGKVPSTSTHFTETNENMTLYKMNSHQHIPEIMQQLTKWDESIPAIQFSTSLIPITRGIFTTIYVRPKKPIAWEELHKLYESTYENAPFVRIQKENVYPTVKQVTASNYCDIGLAYNEITNVITIVSVIDNLVKGAAGQAIQNLNIMANFAENDGLGFIPVYP.

The active site involves Cys-147.

The protein belongs to the NAGSA dehydrogenase family. Type 1 subfamily.

It is found in the cytoplasm. It catalyses the reaction N-acetyl-L-glutamate 5-semialdehyde + phosphate + NADP(+) = N-acetyl-L-glutamyl 5-phosphate + NADPH + H(+). The protein operates within amino-acid biosynthesis; L-arginine biosynthesis; N(2)-acetyl-L-ornithine from L-glutamate: step 3/4. Functionally, catalyzes the NADPH-dependent reduction of N-acetyl-5-glutamyl phosphate to yield N-acetyl-L-glutamate 5-semialdehyde. This Listeria welshimeri serovar 6b (strain ATCC 35897 / DSM 20650 / CCUG 15529 / CIP 8149 / NCTC 11857 / SLCC 5334 / V8) protein is N-acetyl-gamma-glutamyl-phosphate reductase.